A 198-amino-acid polypeptide reads, in one-letter code: Transcription antitermination protein NusB (198 aa).

It belongs to the NusB family.

Involved in transcription antitermination. Required for transcription of ribosomal RNA (rRNA) genes. Binds specifically to the boxA antiterminator sequence of the ribosomal RNA (rrn) operons. The sequence is that of Transcription antitermination protein NusB from Methylococcus capsulatus (strain ATCC 33009 / NCIMB 11132 / Bath).